Reading from the N-terminus, the 158-residue chain is Transcriptional repressor NrdR (158 aa).

A zinc finger spans residues 3 to 34 (CPFCSFPESRVLDSRPADEGNSIRRRRECGEC). An ATP-cone domain is found at 49–139 (LVVVKKDGRR…VYRQFGDIYS (91 aa)).

It belongs to the NrdR family. It depends on Zn(2+) as a cofactor.

Functionally, negatively regulates transcription of bacterial ribonucleotide reductase nrd genes and operons by binding to NrdR-boxes. This Desulforamulus reducens (strain ATCC BAA-1160 / DSM 100696 / MI-1) (Desulfotomaculum reducens) protein is Transcriptional repressor NrdR.